The chain runs to 183 residues: Large ribosomal subunit protein uL5 (183 aa).

It belongs to the universal ribosomal protein uL5 family. In terms of assembly, part of the 50S ribosomal subunit; part of the 5S rRNA/L5/L18/L25 subcomplex. Contacts the 5S rRNA and the P site tRNA. Forms a bridge to the 30S subunit in the 70S ribosome.

In terms of biological role, this is one of the proteins that bind and probably mediate the attachment of the 5S RNA into the large ribosomal subunit, where it forms part of the central protuberance. In the 70S ribosome it contacts protein S13 of the 30S subunit (bridge B1b), connecting the 2 subunits; this bridge is implicated in subunit movement. Contacts the P site tRNA; the 5S rRNA and some of its associated proteins might help stabilize positioning of ribosome-bound tRNAs. The sequence is that of Large ribosomal subunit protein uL5 from Fusobacterium nucleatum subsp. nucleatum (strain ATCC 25586 / DSM 15643 / BCRC 10681 / CIP 101130 / JCM 8532 / KCTC 2640 / LMG 13131 / VPI 4355).